The chain runs to 319 residues: MMFLSFNMISGGNTLQRFDPVACVSSVPLLLAPTTRPTFHFPSPFLSKPKPTYLFTSFSSSSSSSSSFFSSTTPPRSTMLHHDPLVSDVYATAISGVVALSFLRLFQETAKRDLFDQKLNRKLVHISIGLIFMLCXPLFSTETWASFFAALIPGINIFRMLVIGLGILKDEATVKSMSRFGDYRELLKGPLYYAATITLAAIIYWRTSPISIAAICNLCAGDGMADIVGRRLGGEKIPYNKNKSFAGSIAMATAGFLTSIGYMWYFSSFGFIEGSWKLVLGFLLVSIVTAFVESLPISTELDDNLTVPLTSILVGSIIL.

The N-terminal 22 residues, 1-22 (MMFLSFNMISGGNTLQRFDPVA), are a transit peptide targeting the chloroplast. Helical transmembrane passes span 83–103 (DPLV…LSFL), 123–143 (LVHI…STET), 147–167 (FFAA…GLGI), 185–205 (ELLK…IIYW), 252–272 (ATAG…FGFI), and 278–298 (LVLG…LPIS).

This sequence belongs to the polyprenol kinase family.

It is found in the plastid. It localises to the chloroplast membrane. It catalyses the reaction phytol + CTP = phytyl phosphate + CDP + H(+). It functions in the pathway cofactor biosynthesis; tocopherol biosynthesis. Its function is as follows. Involved in the activation and reutilization of phytol from chlorophyll degradation in plant metabolism, including tocopherol biosynthesis. Catalyzes the conversion of phytol to phytol monophosphate (PMP). The polypeptide is Probable phytol kinase 3, chloroplastic (Glycine max (Soybean)).